The following is a 422-amino-acid chain: 4-hydroxy-3-methylbut-2-en-1-yl diphosphate synthase (flavodoxin) (422 aa).

[4Fe-4S] cluster-binding residues include Cys316, Cys319, Cys362, and Glu369.

Belongs to the IspG family. The cofactor is [4Fe-4S] cluster.

It carries out the reaction (2E)-4-hydroxy-3-methylbut-2-enyl diphosphate + oxidized [flavodoxin] + H2O + 2 H(+) = 2-C-methyl-D-erythritol 2,4-cyclic diphosphate + reduced [flavodoxin]. It participates in isoprenoid biosynthesis; isopentenyl diphosphate biosynthesis via DXP pathway; isopentenyl diphosphate from 1-deoxy-D-xylulose 5-phosphate: step 5/6. In terms of biological role, converts 2C-methyl-D-erythritol 2,4-cyclodiphosphate (ME-2,4cPP) into 1-hydroxy-2-methyl-2-(E)-butenyl 4-diphosphate. The protein is 4-hydroxy-3-methylbut-2-en-1-yl diphosphate synthase (flavodoxin) of Anaplasma marginale (strain St. Maries).